The sequence spans 184 residues: NADH-quinone oxidoreductase subunit B (184 aa).

[4Fe-4S] cluster is bound by residues Cys-37, Cys-38, Cys-103, and Cys-132.

This sequence belongs to the complex I 20 kDa subunit family. NDH-1 is composed of 14 different subunits. Subunits NuoB, C, D, E, F, and G constitute the peripheral sector of the complex. It depends on [4Fe-4S] cluster as a cofactor.

The protein localises to the cell membrane. It carries out the reaction a quinone + NADH + 5 H(+)(in) = a quinol + NAD(+) + 4 H(+)(out). Its function is as follows. NDH-1 shuttles electrons from NADH, via FMN and iron-sulfur (Fe-S) centers, to quinones in the respiratory chain. The immediate electron acceptor for the enzyme in this species is believed to be a menaquinone. Couples the redox reaction to proton translocation (for every two electrons transferred, four hydrogen ions are translocated across the cytoplasmic membrane), and thus conserves the redox energy in a proton gradient. The chain is NADH-quinone oxidoreductase subunit B from Mycobacterium marinum (strain ATCC BAA-535 / M).